The following is a 181-amino-acid chain: Der GTPase-activating protein YihI (181 aa).

Disordered regions lie at residues M1–P75 and E145–G181. The segment covering R32–L43 has biased composition (basic residues). Over residues P146 to E155 the composition is skewed to acidic residues. Residues A156–D165 are compositionally biased toward basic and acidic residues. The segment covering D166–G181 has biased composition (acidic residues).

The protein belongs to the YihI family. Interacts with Der.

Its function is as follows. A GTPase-activating protein (GAP) that modifies Der/EngA GTPase function. May play a role in ribosome biogenesis. The chain is Der GTPase-activating protein YihI from Vibrio vulnificus (strain CMCP6).